Reading from the N-terminus, the 414-residue chain is CCA-adding enzyme (414 aa).

Residues Gly-8 and Arg-11 each contribute to the ATP site. CTP-binding residues include Gly-8 and Arg-11. Residues Asp-21 and Asp-23 each contribute to the Mg(2+) site. Arg-91, Arg-137, and Arg-140 together coordinate ATP. CTP-binding residues include Arg-91, Arg-137, and Arg-140.

It belongs to the tRNA nucleotidyltransferase/poly(A) polymerase family. Bacterial CCA-adding enzyme type 2 subfamily. Mg(2+) is required as a cofactor.

It carries out the reaction a tRNA precursor + 2 CTP + ATP = a tRNA with a 3' CCA end + 3 diphosphate. The enzyme catalyses a tRNA with a 3' CCA end + 2 CTP + ATP = a tRNA with a 3' CCACCA end + 3 diphosphate. In terms of biological role, catalyzes the addition and repair of the essential 3'-terminal CCA sequence in tRNAs without using a nucleic acid template. Adds these three nucleotides in the order of C, C, and A to the tRNA nucleotide-73, using CTP and ATP as substrates and producing inorganic pyrophosphate. tRNA 3'-terminal CCA addition is required both for tRNA processing and repair. Also involved in tRNA surveillance by mediating tandem CCA addition to generate a CCACCA at the 3' terminus of unstable tRNAs. While stable tRNAs receive only 3'-terminal CCA, unstable tRNAs are marked with CCACCA and rapidly degraded. This Buchnera aphidicola subsp. Acyrthosiphon pisum (strain 5A) protein is CCA-adding enzyme.